Consider the following 260-residue polypeptide: Imidazole glycerol phosphate synthase subunit HisF (260 aa).

Active-site residues include Asp-11 and Asp-130.

The protein belongs to the HisA/HisF family. In terms of assembly, heterodimer of HisH and HisF.

Its subcellular location is the cytoplasm. It catalyses the reaction 5-[(5-phospho-1-deoxy-D-ribulos-1-ylimino)methylamino]-1-(5-phospho-beta-D-ribosyl)imidazole-4-carboxamide + L-glutamine = D-erythro-1-(imidazol-4-yl)glycerol 3-phosphate + 5-amino-1-(5-phospho-beta-D-ribosyl)imidazole-4-carboxamide + L-glutamate + H(+). Its pathway is amino-acid biosynthesis; L-histidine biosynthesis; L-histidine from 5-phospho-alpha-D-ribose 1-diphosphate: step 5/9. Its function is as follows. IGPS catalyzes the conversion of PRFAR and glutamine to IGP, AICAR and glutamate. The HisF subunit catalyzes the cyclization activity that produces IGP and AICAR from PRFAR using the ammonia provided by the HisH subunit. The polypeptide is Imidazole glycerol phosphate synthase subunit HisF (Thermomicrobium roseum (strain ATCC 27502 / DSM 5159 / P-2)).